Consider the following 159-residue polypeptide: MSLEGVFKEGFVTTSYDSVVNWAKTGSLWPMTFGLACCAVEMMHAGAARYDIDRFGMLFRPSPRQSDLMIVAGTLCNKMGPALRKVYDQMAEPRWVISMGSCANGGGYYHYSYSVVRGCDRIVPVDVYVPGCPPTAEALLYGIIQLQQKIRRTNTIARA.

Residues C37, C38, C102, and C132 each coordinate [4Fe-4S] cluster.

It belongs to the complex I 20 kDa subunit family. In terms of assembly, NDH-1 is composed of 14 different subunits. Subunits NuoB, C, D, E, F, and G constitute the peripheral sector of the complex. Requires [4Fe-4S] cluster as cofactor.

Its subcellular location is the cell inner membrane. The catalysed reaction is a quinone + NADH + 5 H(+)(in) = a quinol + NAD(+) + 4 H(+)(out). In terms of biological role, NDH-1 shuttles electrons from NADH, via FMN and iron-sulfur (Fe-S) centers, to quinones in the respiratory chain. Couples the redox reaction to proton translocation (for every two electrons transferred, four hydrogen ions are translocated across the cytoplasmic membrane), and thus conserves the redox energy in a proton gradient. This Polaromonas naphthalenivorans (strain CJ2) protein is NADH-quinone oxidoreductase subunit B.